A 453-amino-acid chain; its full sequence is Allantoinase (453 aa).

Positions 59, 61, 146, 186, 242, and 315 each coordinate Zn(2+). An N6-carboxylysine modification is found at K146.

This sequence belongs to the metallo-dependent hydrolases superfamily. Allantoinase family. In terms of assembly, homotetramer. Zn(2+) serves as cofactor. Carboxylation allows a single lysine to coordinate two zinc ions.

The enzyme catalyses (S)-allantoin + H2O = allantoate + H(+). The protein operates within nitrogen metabolism; (S)-allantoin degradation; allantoate from (S)-allantoin: step 1/1. Its function is as follows. Catalyzes the conversion of allantoin (5-ureidohydantoin) to allantoic acid by hydrolytic cleavage of the five-member hydantoin ring. This Salmonella paratyphi B (strain ATCC BAA-1250 / SPB7) protein is Allantoinase.